Consider the following 90-residue polypeptide: UPF0329 protein ECU04_1650 (90 aa).

The protein belongs to the UPF0329 family.

The protein is UPF0329 protein ECU04_1650 of Encephalitozoon cuniculi (strain GB-M1) (Microsporidian parasite).